Here is a 234-residue protein sequence, read N- to C-terminus: Large ribosomal subunit protein uL1 (234 aa).

The protein belongs to the universal ribosomal protein uL1 family. In terms of assembly, part of the 50S ribosomal subunit.

Its function is as follows. Binds directly to 23S rRNA. The L1 stalk is quite mobile in the ribosome, and is involved in E site tRNA release. Functionally, protein L1 is also a translational repressor protein, it controls the translation of the L11 operon by binding to its mRNA. The polypeptide is Large ribosomal subunit protein uL1 (Serratia marcescens).